The chain runs to 242 residues: Ribonuclease PH (242 aa).

Residues Arg-87 and 125–127 (GTR) each bind phosphate.

Belongs to the RNase PH family. Homohexameric ring arranged as a trimer of dimers.

The catalysed reaction is tRNA(n+1) + phosphate = tRNA(n) + a ribonucleoside 5'-diphosphate. Functionally, phosphorolytic 3'-5' exoribonuclease that plays an important role in tRNA 3'-end maturation. Removes nucleotide residues following the 3'-CCA terminus of tRNAs; can also add nucleotides to the ends of RNA molecules by using nucleoside diphosphates as substrates, but this may not be physiologically important. Probably plays a role in initiation of 16S rRNA degradation (leading to ribosome degradation) during starvation. This chain is Ribonuclease PH, found in Thermosynechococcus vestitus (strain NIES-2133 / IAM M-273 / BP-1).